A 47-amino-acid chain; its full sequence is Capistruin (47 aa).

Residues 1–28 (MVRLLAKLLRSTIHGSNGVSLDAVSSTH) constitute a propeptide that is removed on maturation. Residues 29–37 (GTPGFQTPD) constitute a cross-link (isoaspartyl glycine isopeptide (Gly-Asp)).

Post-translationally, it is assumed that the two processing enzymes CapB/CapC convert the precursor protein CapA into the mature lasso peptide capistruin. CapB is assumed to cleave the precursor protein CapA and to set an N-terminal Gly free, whose a-NH2 group acts as the nucleophile in the subsequent cyclization reaction. CapC is most likely involved in the side-chain carboxyl group activation of aspartic acid at position 9 generating the electrophile for the condensation reaction. CapD may export capistruin outside of the producing cells.

Its subcellular location is the secreted. Its function is as follows. Peptide antibiotic that functions through inhibition of the bacterial DNA-dependent RNA polymerase (RNAP). Inhibits transcription by binding in RNAP secondary channel, where it sterically blocks the folding of the trigger loop, which is essential for efficient catalysis. In contrast to MccJ25, does not restrict access of nucleotide substrates to the catalytic center and shows a non-competitive mode of inhibition. Shows activity against closely related Gram-negative Burkholderia and Pseudomonas strains. Is not active against Gram-positive bacteria. This Burkholderia thailandensis (strain ATCC 700388 / DSM 13276 / CCUG 48851 / CIP 106301 / E264) protein is Capistruin.